We begin with the raw amino-acid sequence, 220 residues long: Deoxyribose-phosphate aldolase (220 aa).

The active-site Proton donor/acceptor is the Asp-89. The active-site Schiff-base intermediate with acetaldehyde is the Lys-151. Residue Lys-180 is the Proton donor/acceptor of the active site.

This sequence belongs to the DeoC/FbaB aldolase family. DeoC type 1 subfamily.

The protein localises to the cytoplasm. It catalyses the reaction 2-deoxy-D-ribose 5-phosphate = D-glyceraldehyde 3-phosphate + acetaldehyde. It functions in the pathway carbohydrate degradation; 2-deoxy-D-ribose 1-phosphate degradation; D-glyceraldehyde 3-phosphate and acetaldehyde from 2-deoxy-alpha-D-ribose 1-phosphate: step 2/2. Functionally, catalyzes a reversible aldol reaction between acetaldehyde and D-glyceraldehyde 3-phosphate to generate 2-deoxy-D-ribose 5-phosphate. This is Deoxyribose-phosphate aldolase from Staphylococcus saprophyticus subsp. saprophyticus (strain ATCC 15305 / DSM 20229 / NCIMB 8711 / NCTC 7292 / S-41).